The sequence spans 260 residues: Hydroxyethylthiazole kinase 1 (260 aa).

Met39 lines the substrate pocket. ATP is bound by residues Arg115 and Thr160. Gly187 serves as a coordination point for substrate.

It belongs to the Thz kinase family. Requires Mg(2+) as cofactor.

It catalyses the reaction 5-(2-hydroxyethyl)-4-methylthiazole + ATP = 4-methyl-5-(2-phosphooxyethyl)-thiazole + ADP + H(+). Its pathway is cofactor biosynthesis; thiamine diphosphate biosynthesis; 4-methyl-5-(2-phosphoethyl)-thiazole from 5-(2-hydroxyethyl)-4-methylthiazole: step 1/1. In terms of biological role, catalyzes the phosphorylation of the hydroxyl group of 4-methyl-5-beta-hydroxyethylthiazole (THZ). This chain is Hydroxyethylthiazole kinase 1, found in Streptococcus pneumoniae serotype 19F (strain G54).